The sequence spans 690 residues: uncharacterized protein (690 aa).

This sequence to M.genitalium MG366 and M.pneumoniae MPN544.

This is an uncharacterized protein from Ureaplasma parvum serovar 3 (strain ATCC 700970).